Reading from the N-terminus, the 152-residue chain is Cytosolic calcium-binding protein 1 (152 aa).

A run of 7 repeats spans residues 57-62, 67-71, 78-82, 104-108, 112-116, 124-129, and 131-136. The 7 X 5 AA approximate repeats of V-E-E-K-K stretch occupies residues 57 to 136; sequence VEETEKPIEE…EKKPEAEEEK (80 aa). Residues 60 to 152 are disordered; it reads TEKPIEETEE…VTAPVEKADE (93 aa). A compositionally biased stretch (basic and acidic residues) spans 96–138; sequence DESKTEEVVEAKKEEEVEEKKTEEAPVVVEEEKKPEAEEEKPA.

As to expression, predominantly expressed in petioles (at protein level). Mainly observed in shoots, flowers, siliques and roots, and, to a lower extent, in stems and leaves.

Its subcellular location is the cytoplasm. It is found in the cytosol. Functionally, binds calcium Ca(2+) and may act as a signal mediator to buffer Ca(2+). The protein is Cytosolic calcium-binding protein 1 of Arabidopsis thaliana (Mouse-ear cress).